The following is a 219-amino-acid chain: KP6 killer toxin (219 aa).

The N-terminal stretch at M1 to A19 is a signal peptide. Residues L20–R27 constitute a propeptide that is removed on maturation. 4 disulfide bridges follow: C32–C39, C43–C101, C45–C92, and C62–C78. N-linked (GlcNAc...) asparagine; by host glycosylation is present at N98. Residues K106–R138 constitute a propeptide that is removed on maturation. Residues G120–P142 are disordered.

Heterodimer of two small polypeptides that are not covalently linked.

Its subcellular location is the secreted. This protein is lethal to sensitive cells of the same or related species. The KP6 alpha subunit is known to recognize some cellular receptors before interaction of the complex with KP6 beta, precipitating cell death. The chain is KP6 killer toxin from Ustilago maydis P6 virus (UmV6).